The following is a 750-amino-acid chain: Photosystem I P700 chlorophyll a apoprotein A1 (750 aa).

Transmembrane regions (helical) follow at residues V70–A93, L156–H179, L195–L219, I291–Y309, W346–Y369, L385–V411, A433–H455, and F531–L549. 2 residues coordinate [4Fe-4S] cluster: C573 and C582. The next 2 membrane-spanning stretches (helical) occupy residues H589–W610 and L664–F686. H675 is a binding site for chlorophyll a'. Residues M683 and Y691 each contribute to the chlorophyll a site. Position 692 (W692) interacts with phylloquinone. The chain crosses the membrane as a helical span at residues A724–A744.

Belongs to the PsaA/PsaB family. In terms of assembly, the PsaA/B heterodimer binds the P700 chlorophyll special pair and subsequent electron acceptors. PSI consists of a core antenna complex that captures photons, and an electron transfer chain that converts photonic excitation into a charge separation. The eukaryotic PSI reaction center is composed of at least 11 subunits. The cofactor is P700 is a chlorophyll a/chlorophyll a' dimer, A0 is one or more chlorophyll a, A1 is one or both phylloquinones and FX is a shared 4Fe-4S iron-sulfur center..

It is found in the plastid. The protein resides in the chloroplast thylakoid membrane. The catalysed reaction is reduced [plastocyanin] + hnu + oxidized [2Fe-2S]-[ferredoxin] = oxidized [plastocyanin] + reduced [2Fe-2S]-[ferredoxin]. PsaA and PsaB bind P700, the primary electron donor of photosystem I (PSI), as well as the electron acceptors A0, A1 and FX. PSI is a plastocyanin-ferredoxin oxidoreductase, converting photonic excitation into a charge separation, which transfers an electron from the donor P700 chlorophyll pair to the spectroscopically characterized acceptors A0, A1, FX, FA and FB in turn. Oxidized P700 is reduced on the lumenal side of the thylakoid membrane by plastocyanin. In Citrus sinensis (Sweet orange), this protein is Photosystem I P700 chlorophyll a apoprotein A1.